A 357-amino-acid chain; its full sequence is MGLALILVINPGSTSTKVAVFRDKEPVFTETLRHSTEELSKYKRIIDQFEFRTQAILDMLKEKGISLSQIDAIVGRGGLLKPIESGTYIVNEKMLEDLKKAERGEHASNLGAIIAYTLAKEHNIPAYIVDPVVVDELEDVARITGLPEIEKQSIFHALNQKAIARRLASDLGKRYDEVNLIIAHLGGGISVGAHRKGRVIDVNDALNGEGPFSPERAGGLPVLDLVKLCYSGKYTFEEMKKKLIGKGGIVAHLGTNDVREVYKMIENGDKNAELILDAMAYQTAKEIGSMAVVLKGKVDAIGITGGIAHNEDFVRRIRERVEFIAPVYVYPGEDEMLALAEGAYRVLTGEENPKTYS.

This sequence belongs to the acetokinase family.

Its subcellular location is the cytoplasm. The catalysed reaction is butanoate + ATP = butanoyl phosphate + ADP. This is Probable butyrate kinase 1 from Caldanaerobacter subterraneus subsp. tengcongensis (strain DSM 15242 / JCM 11007 / NBRC 100824 / MB4) (Thermoanaerobacter tengcongensis).